The primary structure comprises 448 residues: Leukocyte immunoglobulin-like receptor subfamily B member 4 (448 aa).

The N-terminal stretch at 1–21 (MIPTFTALLCLGLSLGPRTHM) is a signal peptide. Residues 22-259 (QAGPLPKPTL…PHSGLRRHWE (238 aa)) lie on the Extracellular side of the membrane. 2 consecutive Ig-like C2-type domains span residues 27 to 118 (PKPT…LVMT) and 124 to 218 (PTLS…LIVS). Cystine bridges form between cysteine 49–cysteine 98 and cysteine 144–cysteine 195. The disordered stretch occupies residues 217–248 (VSGSLEDPRPSPTRSVSTAAGPEDQPLMPTGS). A helical membrane pass occupies residues 260–280 (VLIGVLVVSILLLSLLLFLLL). Topologically, residues 281 to 448 (QHWRQGKHRT…PSVYATLAIH (168 aa)) are cytoplasmic. Residues 297–448 (DFQRPPGAAE…PSVYATLAIH (152 aa)) are disordered. At serine 319 the chain carries Phosphoserine. The span at 344 to 354 (MDTRQSPHDED) shows a compositional bias: basic and acidic residues. The short motif at 358 to 363 (VTYAKV) is the ITIM motif 1 element. Basic and acidic residues predominate over residues 384 to 398 (LDTKDRQAEEDRQMD). Short sequence motifs (ITIM motif) lie at residues 410-415 (VTYAQL) and 440-445 (SVYATL).

As to quaternary structure, interacts with PTPN6. As to expression, detected on monocytes, macrophages, dendritic cells, natural killer cells and B-cells (at protein level). Expressed in the lung.

The protein resides in the cell membrane. Functionally, inhibitory receptor involved in the down-regulation of the immune response and the development of immune tolerance. Receptor for FN1. Receptor for apolipoprotein APOE. Receptor for ALCAM/CD166. Inhibits receptor-mediated phosphorylation of cellular proteins and mobilization of intracellular calcium ions. Inhibits FCGR1A/CD64-mediated monocyte activation by inducing phosphatase-mediated down-regulation of the phosphorylation of multiple proteins including LCK, SYK, LAT and ERK, leading to a reduction in TNF production. This inhibition of monocyte activation occurs at least in part via binding to FN1. Inhibits T cell proliferation, inducing anergy, suppressing the differentiation of IFNG-producing CD8+ cytotoxic T cells and enhancing the generation of CD8+ T suppressor cells. Induces up-regulation of CD86 on dendritic cells. Interferes with TNFRSF5-signaling and NF-kappa-B up-regulation. This chain is Leukocyte immunoglobulin-like receptor subfamily B member 4 (LILRB4), found in Homo sapiens (Human).